Reading from the N-terminus, the 359-residue chain is MAPPRPPRLLPALRALLYWSLVYGYCGLCASVHLLKLLWSIGRAPAQTFRRAARANPPACLNDPSLGTHCYVRIKDSGLRFHYVAAGERGKPLMLLLHGFPEFWYSWRHQLREFKSEYRVVALDLRGYGESDAPAHQESYKLDCLIADIKDILDSLGYSKCVLIGHDWGGMIAWLIAVCYPEMIMKLIVINFPHPSVFTEYILRHPAQLFRSSFYYFFQIPRFPEFMFSINDFKALKHLFTSQSTGIGRKGRQLTTEDLEAYVYVFSQPGALSGPINHYRNIFSCLPLKHHMVTTPTLLLWGEEDAFMEVEMAEVTKIYVKNYFRLTILSEGSHWLQQDQPDIVNGLIWAFLKEETRRD.

The chain crosses the membrane as a helical; Signal-anchor for type II membrane protein span at residues 15–35 (ALLYWSLVYGYCGLCASVHLL). Positions 92-337 (PLMLLLHGFP…ILSEGSHWLQ (246 aa)) constitute an AB hydrolase-1 domain. D167 acts as the Nucleophile in catalysis. The Proton donor role is filled by Y279. H334 serves as the catalytic Proton acceptor.

Belongs to the AB hydrolase superfamily. Epoxide hydrolase family.

It localises to the membrane. The sequence is that of Epoxide hydrolase 4 (Ephx4) from Mus musculus (Mouse).